Here is a 382-residue protein sequence, read N- to C-terminus: Lysophosphatidylserine lipase ABHD12 (382 aa).

The segment covering 1-12 (MRKRKGSADHDS) has biased composition (basic and acidic residues). Positions 1-45 (MRKRKGSADHDSSFTATLTDGSSDLKQCHKGTDADTDPGGSGKEM) are disordered. The Cytoplasmic segment spans residues 1–60 (MRKRKGSADHDSSFTATLTDGSSDLKQCHKGTDADTDPGGSGKEMGRRCRRGGLMWRLRR). Residues 13 to 25 (SFTATLTDGSSDL) are compositionally biased toward polar residues. The chain crosses the membrane as a helical span at residues 61-81 (ILIWLLGIYIAIPVIIKVCPS). Residues 82-382 (IQAKLVFLNF…DFLRAPHPHG (301 aa)) lie on the Extracellular side of the membrane. An N-linked (GlcNAc...) asparagine glycan is attached at Asn-109. Ser-232 (nucleophile) is an active-site residue. Active-site charge relay system residues include Asp-319 and His-358.

Belongs to the serine esterase family. As to expression, ubiquitously expressed in adult tissues.

It is found in the endoplasmic reticulum membrane. It carries out the reaction 1-(9Z-octadecenoyl)-sn-glycero-3-phospho-L-serine + H2O = sn-glycero-3-phospho-L-serine + (9Z)-octadecenoate + H(+). The catalysed reaction is 1-(9Z-octadecenoyl)-sn-glycero-3-phospho-(1'-sn-glycerol) + H2O = sn-glycero-3-phospho-(1'-sn-glycerol) + (9Z)-octadecenoate + H(+). It catalyses the reaction 1-(9Z-octadecenoyl)-sn-glycero-3-phospho-(1D-myo-inositol) + H2O = sn-glycero-3-phospho-1D-myo-inositol + (9Z)-octadecenoate + H(+). The enzyme catalyses 1-(9Z-octadecenoyl)-sn-glycero-3-phosphoethanolamine + H2O = sn-glycero-3-phosphoethanolamine + (9Z)-octadecenoate + H(+). It carries out the reaction 1-(9Z-octadecenoyl)-sn-glycero-3-phosphocholine + H2O = 1-(9Z-octadecenoyl)-sn-glycerol + phosphocholine + H(+). The catalysed reaction is 2-(9Z-octadecenoyl)-glycerol + H2O = glycerol + (9Z)-octadecenoate + H(+). It catalyses the reaction 1-hexadecanoyl-sn-glycero-3-phospho-L-serine + H2O = sn-glycero-3-phospho-L-serine + hexadecanoate + H(+). The enzyme catalyses 2-(5Z,8Z,11Z,14Z-eicosatetraenoyl)-glycerol + H2O = glycerol + (5Z,8Z,11Z,14Z)-eicosatetraenoate + H(+). It carries out the reaction Hydrolyzes glycerol monoesters of long-chain fatty acids.. The catalysed reaction is 1-decanoylglycerol + H2O = decanoate + glycerol + H(+). It catalyses the reaction 1-dodecanoylglycerol + H2O = dodecanoate + glycerol + H(+). The enzyme catalyses 1-tetradecanoylglycerol + H2O = tetradecanoate + glycerol + H(+). It carries out the reaction 2-hexadecanoylglycerol + H2O = glycerol + hexadecanoate + H(+). The catalysed reaction is 1-(9Z-octadecenoyl)-glycerol + H2O = glycerol + (9Z)-octadecenoate + H(+). It catalyses the reaction 2-(9Z,12Z-octadecadienoyl)-glycerol + H2O = (9Z,12Z)-octadecadienoate + glycerol + H(+). The enzyme catalyses 1-(5Z,8Z,11Z,14Z-eicosatetraenoyl)-glycerol + H2O = glycerol + (5Z,8Z,11Z,14Z)-eicosatetraenoate + H(+). It carries out the reaction 1-(9Z,12Z-octadecadienoyl)-glycerol + H2O = (9Z,12Z)-octadecadienoate + glycerol + H(+). The catalysed reaction is 1-hexadecanoylglycerol + H2O = glycerol + hexadecanoate + H(+). It catalyses the reaction 1-octadecanoylglycerol + H2O = octadecanoate + glycerol + H(+). The enzyme catalyses 1-octadecanoyl-2-(9,10-epoxyoctadecanoyl)-sn-glycero-3-phospho-L-serine + H2O = 9,10-epoxyoctadecanoate + 1-octadecanoyl-sn-glycero-3-phosphoserine + H(+). It carries out the reaction 1-octadecanoyl-2-(10-hydroxyoctadecanoyl)-sn-glycero-3-phospho-L-serine + H2O = 1-octadecanoyl-sn-glycero-3-phosphoserine + 10-hydroxyoctadecanoate + H(+). The catalysed reaction is 1-hexadecanoyl-2-(10-hydroxyoctadecanoyl)-sn-glycero-3-phospho-L-serine + H2O = 10-hydroxyoctadecanoate + 1-hexadecanoyl-sn-glycero-3-phospho-L-serine + H(+). Its function is as follows. Lysophosphatidylserine (LPS) lipase that mediates the hydrolysis of lysophosphatidylserine, a class of signaling lipids that regulates immunological and neurological processes. Represents a major lysophosphatidylserine lipase in the brain, thereby playing a key role in the central nervous system. Also able to hydrolyze oxidized phosphatidylserine; oxidized phosphatidylserine is produced in response to severe inflammatory stress and constitutes a proapoptotic 'eat me' signal. Also has monoacylglycerol (MAG) lipase activity: hydrolyzes 2-arachidonoylglycerol (2-AG), thereby acting as a regulator of endocannabinoid signaling pathways. Has a strong preference for very-long-chain lipid substrates; substrate specificity is likely due to improved catalysis and not improved substrate binding. This chain is Lysophosphatidylserine lipase ABHD12, found in Danio rerio (Zebrafish).